A 201-amino-acid polypeptide reads, in one-letter code: Cutinase (201 aa).

The first 20 residues, 1–20 (MKTSAQQLLSLLLLPLSAIA), serve as a signal peptide directing secretion. An intrachain disulfide couples Cys-31 to Cys-105. The active-site Nucleophile is the Ser-116. The cysteines at positions 164 and 171 are disulfide-linked. The active site involves Asp-168. His-181 serves as the catalytic Proton donor/acceptor.

It belongs to the cutinase family. Post-translationally, the 2 disulfide bonds play a critical role in holding the catalytic residues in juxta-position; reduction of the disulfide bridges results in the complete inactivation of the enzyme.

The protein localises to the secreted. The enzyme catalyses cutin + H2O = cutin monomers.. Catalyzes the hydrolysis of complex carboxylic polyesters found in the cell wall of plants. Degrades cutin, a macromolecule that forms the structure of the plant cuticle. Allows pathogenic fungi to penetrate through the cuticular barrier into the host plant during the initial stage of fungal infection. The protein is Cutinase (CUT1) of Monilinia fructicola (Brown rot fungus).